A 499-amino-acid chain; its full sequence is MPSLFRASLLFSLGILLSRIFGYVRDATVAYYFGASAVSDAFFIAFRIPNAFRRIFGEGGFNAVFIPFYGEAVKQNREEEFLRKTFGLLITFSLSVVIIGLLFPEEIISVISPGIKEKETFSYAVEFLKFTILYLPLVSFYAYSMAILLVQGKFFVPSVSQTLFNLGFILSLVILFHTLGHYSLALAVLIGGLFQIIPNTFLLFKEKLLKIPKFSLDREIKTFLKKFLFTLGGFSANQLSLFVDTFLASFLKVGSISYVYYAARIYLLPISLFSISLSNTLLALVSTKKDKEKDTDTALKLTLMLSIPSSFGLFFLSREIVSVLYKRGNFSEEDLFYTSGLLSLYAFSVPFYSLQHILKTVYYSKKNVEIPTKSAFLSVFLEALFGSVFIFLLNFGVYSFPLAALISSSSVLVYLYQKLPQKVSIPFGNLIKYLIASSFMGGLVYLTESLTQNPFILVSFIPIYALFYYVFLIILREELAILISYGIFRRGKILQRESN.

14 helical membrane-spanning segments follow: residues 4 to 24 (LFRASLLFSLGILLSRIFGYV), 26 to 46 (DATVAYYFGASAVSDAFFIAF), 88 to 108 (LLITFSLSVVIIGLLFPEEII), 130 to 150 (FTILYLPLVSFYAYSMAILLV), 154 to 174 (FFVPSVSQTLFNLGFILSLVI), 184 to 204 (LALAVLIGGLFQIIPNTFLLF), 227 to 247 (FLFTLGGFSANQLSLFVDTFL), 265 to 285 (IYLLPISLFSISLSNTLLALV), 297 to 317 (TALKLTLMLSIPSSFGLFFLS), 335 to 355 (LFYTSGLLSLYAFSVPFYSLQ), 375 to 395 (AFLSVFLEALFGSVFIFLLNF), 396 to 416 (GVYSFPLAALISSSSVLVYLY), 425 to 445 (IPFGNLIKYLIASSFMGGLVY), and 455 to 475 (FILVSFIPIYALFYYVFLIIL).

The protein belongs to the MurJ/MviN family.

It is found in the cell inner membrane. Its pathway is cell wall biogenesis; peptidoglycan biosynthesis. Involved in peptidoglycan biosynthesis. Transports lipid-linked peptidoglycan precursors from the inner to the outer leaflet of the cytoplasmic membrane. The chain is Probable lipid II flippase MurJ from Aquifex aeolicus (strain VF5).